A 298-amino-acid polypeptide reads, in one-letter code: Protease HtpX homolog (298 aa).

The next 2 membrane-spanning stretches (helical) occupy residues 5 to 25 (IFLF…VLSV) and 45 to 65 (MALL…SLAI). His155 lines the Zn(2+) pocket. The active site involves Glu156. His159 contributes to the Zn(2+) binding site. Transmembrane regions (helical) follow at residues 170–190 (LLQG…AWIA) and 204–224 (FIAM…VVFA). Glu230 is a binding site for Zn(2+).

Belongs to the peptidase M48B family. Zn(2+) serves as cofactor.

The protein localises to the cell membrane. The chain is Protease HtpX homolog from Bacillus subtilis (strain 168).